A 296-amino-acid chain; its full sequence is Hca operon transcriptional activator HcaR (296 aa).

The HTH lysR-type domain occupies 1–58 (MELRHLRYFVAVAQALNFTRAAEKLHTSQPSLSSQIRDLENCVGVPLLVRDKRKVALT). The H-T-H motif DNA-binding region spans 18–38 (FTRAAEKLHTSQPSLSSQIRD).

This sequence belongs to the LysR transcriptional regulatory family.

Its function is as follows. Transcriptional activator of the hca operon for 3-phenylpropionic acid catabolism. The sequence is that of Hca operon transcriptional activator HcaR (hcaR) from Escherichia coli (strain K12).